The following is a 255-amino-acid chain: Tablysin 15 (255 aa).

A signal peptide spans 1-23 (MTSIPVSSFLLAALVLQYATSDA). 3 disulfides stabilise this stretch: cysteine 27/cysteine 40, cysteine 31/cysteine 117, and cysteine 49/cysteine 110. The short motif at 32-34 (RGD) is the Cell attachment site element. Positions 67–211 (LSKINDVRDH…KARALLTCNF (145 aa)) constitute an SCP domain. Leukotriene E4 contacts are provided by tryptophan 82, histidine 153, and lysine 156. 2 cysteine pairs are disulfide-bonded: cysteine 192/cysteine 209 and cysteine 232/cysteine 243.

Belongs to the CRISP family. As to expression, expressed in salivary glands.

Its subcellular location is the secreted. In terms of biological role, anti-inflammatory scavenger of eicosanoids and antithrombotic protein that inhibits platelets aggregation induced by collagen, ADP and convulxin (GPVI agonist). Exhibits high affinity binding for glycoprotein IIb-IIIa receptor (ITGA2B/ITGB3) and endothelial cell alphaVbeta3 (ITGAV/ITGB3) integrins, but not for alpha-5/beta-1 or alpha-2/beta-1. Accordingly, it blocks endothelial cell adhesion to vitronectin (IC(50)~1 nM) and marginally to fibronectin (IC(50)~1 uM), but not to collagen. It also inhibits fibroblast growth factor (FGF)-induced endothelial cell proliferation, and attenuates tube formation in vitro. In addition, it dose-dependently attenuates thrombus formation to collagen under flow. Also binds proinflammatory cysteinyl leukotrienes (leukotrienes C4 (LTC4), D4 (LTD4) and E4 (LTE4)) with submicromolar affinities. The polypeptide is Tablysin 15 (Tabanus yao (Horsefly)).